Reading from the N-terminus, the 326-residue chain is BTB/POZ domain-containing protein At1g21780 (326 aa).

The region spanning 161–228 (TDVIIHTADG…LYGNITQEEF (68 aa)) is the BTB domain.

As to quaternary structure, homodimer. Interacts with CUL3A and CUL3B.

It participates in protein modification; protein ubiquitination. Its function is as follows. May act as a substrate-specific adapter of an E3 ubiquitin-protein ligase complex (CUL3-RBX1-BTB) which mediates the ubiquitination and subsequent proteasomal degradation of target proteins. In Arabidopsis thaliana (Mouse-ear cress), this protein is BTB/POZ domain-containing protein At1g21780.